A 201-amino-acid polypeptide reads, in one-letter code: Phosphoheptose isomerase (201 aa).

The 160-residue stretch at 36 to 195 folds into the SIS domain; it reads IAKSLNEGGK…EDILFEIPAA (160 aa). Position 51–53 (51–53) interacts with substrate; the sequence is NGG. Residues H60 and E64 each coordinate Zn(2+). Substrate-binding positions include E64, 93–94, 119–121, S124, and Q171; these read ND and STS. Zn(2+)-binding residues include Q171 and H179.

The protein belongs to the SIS family. GmhA subfamily. Zn(2+) serves as cofactor.

The protein localises to the cytoplasm. The catalysed reaction is 2 D-sedoheptulose 7-phosphate = D-glycero-alpha-D-manno-heptose 7-phosphate + D-glycero-beta-D-manno-heptose 7-phosphate. It participates in carbohydrate biosynthesis; D-glycero-D-manno-heptose 7-phosphate biosynthesis; D-glycero-alpha-D-manno-heptose 7-phosphate and D-glycero-beta-D-manno-heptose 7-phosphate from sedoheptulose 7-phosphate: step 1/1. Functionally, catalyzes the isomerization of sedoheptulose 7-phosphate in D-glycero-D-manno-heptose 7-phosphate. This Thermodesulfovibrio yellowstonii (strain ATCC 51303 / DSM 11347 / YP87) protein is Phosphoheptose isomerase.